The chain runs to 200 residues: Shikimate kinase (200 aa).

Residue 33 to 38 coordinates ATP; that stretch reads GAGKST. Mg(2+) is bound at residue Ser37. Residues Asp55, Arg79, and Gly101 each contribute to the substrate site. Position 139 (Arg139) interacts with ATP. Arg158 provides a ligand contact to substrate.

It belongs to the shikimate kinase family. In terms of assembly, monomer. Mg(2+) serves as cofactor.

Its subcellular location is the cytoplasm. The enzyme catalyses shikimate + ATP = 3-phosphoshikimate + ADP + H(+). Its pathway is metabolic intermediate biosynthesis; chorismate biosynthesis; chorismate from D-erythrose 4-phosphate and phosphoenolpyruvate: step 5/7. Catalyzes the specific phosphorylation of the 3-hydroxyl group of shikimic acid using ATP as a cosubstrate. This chain is Shikimate kinase, found in Brucella abortus (strain S19).